Consider the following 272-residue polypeptide: MKRTAFFISDGTGITAETLGQSLLAQFENIQFTKLTRPYIDSIDKARAMVQQIDAAAERDGARPIIFDTIVNRDIRAILDTANGFMIDIFSTFLSPLEQELSSHSSYSVGKSHSIGQHSNYMERIEAVNFALDNDDGARTHYYDKADLILVGVSRCGKTPTCLYMAMQYGIRAANYPLTEDDMERLQLPDSLKKHRDKLFGLTIDPDRLTAIRHERKPNSRYASFAQCEFEVREVENLFRRENIAFINSTHFSVEEISAKILVEKGVERRLK.

Gly-152–Thr-159 provides a ligand contact to ADP.

Belongs to the pyruvate, phosphate/water dikinase regulatory protein family. PSRP subfamily.

It carries out the reaction [pyruvate, water dikinase] + ADP = [pyruvate, water dikinase]-phosphate + AMP + H(+). The catalysed reaction is [pyruvate, water dikinase]-phosphate + phosphate + H(+) = [pyruvate, water dikinase] + diphosphate. Functionally, bifunctional serine/threonine kinase and phosphorylase involved in the regulation of the phosphoenolpyruvate synthase (PEPS) by catalyzing its phosphorylation/dephosphorylation. The chain is Putative phosphoenolpyruvate synthase regulatory protein from Ectopseudomonas mendocina (strain ymp) (Pseudomonas mendocina).